The sequence spans 344 residues: Ribosomal RNA large subunit methyltransferase Cfr (344 aa).

Glu88 serves as the catalytic Proton acceptor. The Radical SAM core domain maps to 95 to 324; that stretch reads KKGWESFCIS…HANGISVATR (230 aa). Residues Cys102 and Cys335 are joined by a disulfide bond. Residues Cys109, Cys113, and Cys116 each contribute to the [4Fe-4S] cluster site. S-adenosyl-L-methionine is bound by residues 155 to 156, Ser186, 209 to 211, and Asn290; these read GE and SLH. Cys335 acts as the S-methylcysteine intermediate in catalysis.

Belongs to the radical SAM superfamily. RlmN family. Cfr subfamily. [4Fe-4S] cluster is required as a cofactor.

Its subcellular location is the cytoplasm. It carries out the reaction adenosine(2503) in 23S rRNA + 2 reduced [2Fe-2S]-[ferredoxin] + 2 S-adenosyl-L-methionine = 8-methyladenosine(2503) in 23S rRNA + 5'-deoxyadenosine + L-methionine + 2 oxidized [2Fe-2S]-[ferredoxin] + S-adenosyl-L-homocysteine. Its function is as follows. Specifically methylates position 8 of adenine 2503 in 23S rRNA. Confers resistance to some classes of antibiotics. The sequence is that of Ribosomal RNA large subunit methyltransferase Cfr from Lachnoclostridium phytofermentans (strain ATCC 700394 / DSM 18823 / ISDg) (Clostridium phytofermentans).